The sequence spans 251 residues: 2,3-bisphosphoglycerate-dependent phosphoglycerate mutase (251 aa).

Substrate is bound by residues 13–20 (RHGESEWN), 26–27 (TG), R65, 92–95 (ERHY), K103, 119–120 (RR), and 186–187 (GN). The active-site Tele-phosphohistidine intermediate is the H14. The active-site Proton donor/acceptor is the E92.

This sequence belongs to the phosphoglycerate mutase family. BPG-dependent PGAM subfamily.

It catalyses the reaction (2R)-2-phosphoglycerate = (2R)-3-phosphoglycerate. It functions in the pathway carbohydrate degradation; glycolysis; pyruvate from D-glyceraldehyde 3-phosphate: step 3/5. Catalyzes the interconversion of 2-phosphoglycerate and 3-phosphoglycerate. The protein is 2,3-bisphosphoglycerate-dependent phosphoglycerate mutase of Rhodococcus jostii (strain RHA1).